The chain runs to 822 residues: Integrator complex assembly factor BRAT1 (822 aa).

Residues 100–200 are required for interaction with NDFIP1; that stretch reads LGLFGESGAP…WPMCAQKIVN (101 aa). 2 HEAT repeats span residues 495-531 and 544-576; these read LLFL…IRHW and SEVP…SSQG. Serine 743 bears the Phosphoserine mark. Residues 820 to 822 carry the BRAT1-like motif motif; the sequence is DCY. Cysteine 821 serves as a coordination point for Zn(2+).

Belongs to the BRAT1 family. Part of the multiprotein complex composed of BRAT1, WDR73, as well as integrator complex subunits INTS9 and INTS11. Interacts with BRCA1 and ATM. Interacts with MTOR and RPTOR. Interacts with NDFIP1. Interacts with SMC1A and PRKDC. Ubiquitinated by NEDD4, NEDD4L and ITCH; mono- and polyubiquitinated forms are detected. In terms of tissue distribution, high levels detected in the cortex and much lower levels detected in the cerebellum, spinal cord and lung (at protein level).

It localises to the nucleus. The protein localises to the cytoplasm. Its function is as follows. Component of a multiprotein complex required for the assembly of the RNA endonuclease module of the integrator complex. Associates with INTS9 and INTS11 in the cytoplasm and blocks the active site of INTS11 to inhibit the endonuclease activity of INTS11 before formation of the full integrator complex. Following dissociation of WDR73 of the complex, BRAT1 facilitates the nuclear import of the INTS9-INTS11 heterodimer. In the nucleus, INTS4 is integrated to the INTS9-INTS11 heterodimer and BRAT1 is released from the mature RNA endonuclease module by inositol hexakisphosphate (InsP6). BRAT1 is also involved in DNA damage response; activates kinases ATM, SMC1A and PRKDC by modulating their phosphorylation status following ionizing radiation (IR) stress. Plays a role in regulating mitochondrial function and cell proliferation. Required for protein stability of MTOR and MTOR-related proteins, and cell cycle progress by growth factors. This is Integrator complex assembly factor BRAT1 from Mus musculus (Mouse).